The primary structure comprises 868 residues: Programmed cell death 6-interacting protein (868 aa).

Residue A2 is modified to N-acetylalanine. Residues 3-392 (TFISVQLKKT…AQMREATTLA (390 aa)) enclose the BRO1 domain. Residues 176–503 (TVDISPDTVG…NFRTVLDKAV (328 aa)) are interaction with CHMP4A, CHMP4B and CHMP4C. An interaction with EIAV p9 region spans residues 176-868 (TVDISPDTVG…PPQQSYYPQQ (693 aa)). K215 is modified (N6-acetyllysine). An interaction with SDCBP region spans residues 418–868 (LTKSRSVIEQ…PPQQSYYPQQ (451 aa)). The residue at position 479 (T479) is a Phosphothreonine. Residue S481 is modified to Phosphoserine. Residues 503 to 868 (VQADGQVKEC…PPQQSYYPQQ (366 aa)) are self-association. Disordered regions lie at residues 713–809 (IARE…YPGY) and 832–868 (PYPP…YPQQ). The segment at 717–720 (PSAP) is interaction with TSG101. Phosphoserine is present on S730. Positions 737 to 763 (PTPPTPAPRTMPPTKPQPPARPPPPVL) are enriched in pro residues. Phosphothreonine occurs at positions 738 and 741. An Omega-N-methylarginine modification is found at R745. The segment covering 778 to 791 (GAGTAAPAPSQTPG) has biased composition (low complexity). Composition is skewed to pro residues over residues 792 to 807 (SAPP…PTYP) and 844 to 860 (APYP…PQPP). Residues 801 to 806 (PPYPTY) are interaction with CEP55. The segment at 864-868 (YYPQQ) is essential to promote virus budding.

In terms of assembly, self-associates. Interacts with SH3KBP1/CIN85. Interacts with PDCD6 in a calcium -dependent manner. Interacts with TSG101 in a calcium-dependent manner; PDCD6IP homooligomerization may be required for TSG101-binding. Interacts with SGSM3. Directly interacts with CHMP4A, CHMP4B and CHMP4C. Directly interacts with CEP55 in a 1:2 stoechiometry. The interaction with CEP55 is required for PDCD6IP targeting to the midbody. May interact with PDGFRB. Interacts with SH3GL1 and SH3GL2/endophilin-1. Forms a complex with SDCBP and SDC2. Found in a complex with F-actin, TJP1/ZO-1 and PARD3. Interacts with CD2AP. Interacts with ARRDC1. Interacts (via BRO1 domain) with the ATG12-ATG3 conjugate; this interaction is bridged by ATG12 and promotes multiple PDCD6IP-mediated functions such as endolysosomal trafficking, macroautophagy and exosome biogenesis. (Microbial infection) Interacts with HIV-1 p6. Interacts with HIV-1 p9. As to quaternary structure, (Microbial infection) Interacts with EIAV p9. In terms of assembly, (Microbial infection) Interacts with Murine leukemia virus Gag polyprotein (via LYPX(n)L motif). (Microbial infection) Interacts with ebola virus protein VP40 (via YPx(n)L/I motif). May be phosphorylated on tyrosine residues by activated PDGFRB.

Its subcellular location is the cytoplasm. The protein resides in the cytosol. It is found in the melanosome. It localises to the cytoskeleton. The protein localises to the microtubule organizing center. Its subcellular location is the centrosome. The protein resides in the secreted. It is found in the extracellular exosome. It localises to the cell junction. The protein localises to the tight junction. Its subcellular location is the midbody. The protein resides in the midbody ring. Its function is as follows. Multifunctional protein involved in endocytosis, multivesicular body biogenesis, membrane repair, cytokinesis, apoptosis and maintenance of tight junction integrity. Class E VPS protein involved in concentration and sorting of cargo proteins of the multivesicular body (MVB) for incorporation into intralumenal vesicles (ILVs) that are generated by invagination and scission from the limiting membrane of the endosome. Binds to the phospholipid lysobisphosphatidic acid (LBPA) which is abundant in MVBs internal membranes. The MVB pathway requires the sequential function of ESCRT-O, -I,-II and -III complexes. The ESCRT machinery also functions in topologically equivalent membrane fission events, such as the terminal stages of cytokinesis. Adapter for a subset of ESCRT-III proteins, such as CHMP4, to function at distinct membranes. Required for completion of cytokinesis. May play a role in the regulation of both apoptosis and cell proliferation. Regulates exosome biogenesis in concert with SDC1/4 and SDCBP. By interacting with F-actin, PARD3 and TJP1 secures the proper assembly and positioning of actomyosin-tight junction complex at the apical sides of adjacent epithelial cells that defines a spatial membrane domain essential for the maintenance of epithelial cell polarity and barrier. In terms of biological role, (Microbial infection) Involved in HIV-1 virus budding. Can replace TSG101 it its role of supporting HIV-1 release; this function requires the interaction with CHMP4B. The ESCRT machinery also functions in topologically equivalent membrane fission events, such as enveloped virus budding (HIV-1 and other lentiviruses). The protein is Programmed cell death 6-interacting protein of Homo sapiens (Human).